A 201-amino-acid chain; its full sequence is Potassium-transporting ATPase KdpC subunit (201 aa).

A helical transmembrane segment spans residues 17–37 (LLTGLAYPLAMTGLAGILFPV).

The protein belongs to the KdpC family. In terms of assembly, the system is composed of three essential subunits: KdpA, KdpB and KdpC.

It localises to the cell inner membrane. In terms of biological role, part of the high-affinity ATP-driven potassium transport (or Kdp) system, which catalyzes the hydrolysis of ATP coupled with the electrogenic transport of potassium into the cytoplasm. This subunit acts as a catalytic chaperone that increases the ATP-binding affinity of the ATP-hydrolyzing subunit KdpB by the formation of a transient KdpB/KdpC/ATP ternary complex. This chain is Potassium-transporting ATPase KdpC subunit, found in Methylobacterium nodulans (strain LMG 21967 / CNCM I-2342 / ORS 2060).